Consider the following 586-residue polypeptide: Frizzled-10-A (586 aa).

Residues 1–26 (MDVSGVTGLLRGTALLLVLAAALCSA) form the signal peptide. The Extracellular segment spans residues 27-230 (ISSINPDRSG…DVYWSKDDKK (204 aa)). In terms of domain architecture, FZ spans 35 to 156 (SGDGRCQAIE…NDPNYLCMEA (122 aa)). Cystine bridges form between C40-C101, C48-C94, C85-C123, C112-C153, and C116-C140. Residue N54 is glycosylated (N-linked (GlcNAc...) asparagine). N159 is a glycosylation site (N-linked (GlcNAc...) asparagine). The interval 161–199 (TDETPRGSSMLPPIFRPQRPSSGHEIYPKDPTSRSSCEN) is disordered. The chain crosses the membrane as a helical span at residues 231 to 251 (FAFIWIAIWSILCFFSSAFTV). Residues 252–267 (LTFLVDPLRFKYPERP) are Cytoplasmic-facing. The chain crosses the membrane as a helical span at residues 268 to 288 (IIFLSMCYCVYSVGYIIRLFA). At 289 to 315 (GADSIACDRDSGQLYVIQEGLESTGCT) the chain is on the extracellular side. The helical transmembrane segment at 316–336 (IVFLILYYFGMASSLWWVILT) threads the bilayer. The Cytoplasmic portion of the chain corresponds to 337 to 356 (LTWFLAAGKKWGHEAIEANS). Residues 357–377 (SYFHLAAWAIPAVKTIMILVM) form a helical membrane-spanning segment. Topologically, residues 378 to 401 (RRVAGDELTGVCYVGSMDVNALTG) are extracellular. Residues 402-422 (FVLIPLACYLIIGTSFILSGF) form a helical membrane-spanning segment. At 423–448 (VALFHIRRVMKTGGENTDKLEKLMVR) the chain is on the cytoplasmic side. Residues 449–469 (IGVFSVLYTVPATCVIACYFY) traverse the membrane as a helical segment. Over 470–507 (ERLNMDFWKILATQDKCKMDSQTKTLDCTMTSSIPAVE) the chain is Extracellular. Residues 508–528 (IFMVKIFMLLVVGITSGMWIW) traverse the membrane as a helical segment. The Cytoplasmic portion of the chain corresponds to 529 to 586 (TSKTVQSWQNVFSKRLKKRNRSKPASVITSAGIYKKPQHPPKVHHGKYESALQSPTCV). A Lys-Thr-X-X-X-Trp motif, mediates interaction with the PDZ domain of Dvl family members motif is present at residues 531-536 (KTVQSW). Residues 563-586 (KKPQHPPKVHHGKYESALQSPTCV) form a disordered region. Over residues 564–573 (KPQHPPKVHH) the composition is skewed to basic residues. Positions 584 to 586 (TCV) match the PDZ-binding motif.

The protein belongs to the G-protein coupled receptor Fz/Smo family. Expressed in liver, lung, brain, testis, stomach, kidney, eye, skeletal muscle and skin.

It is found in the cell membrane. Its function is as follows. Receptor for Wnt proteins. Most of frizzled receptors are coupled to the beta-catenin canonical signaling pathway, which leads to the activation of disheveled proteins, inhibition of GSK-3 kinase, nuclear accumulation of beta-catenin and activation of Wnt target genes. A second signaling pathway involving PKC and calcium fluxes has been seen for some family members, but it is not yet clear if it represents a distinct pathway or if it can be integrated in the canonical pathway, as PKC seems to be required for Wnt-mediated inactivation of GSK-3 kinase. Both pathways seem to involve interactions with G-proteins. May be involved in transduction and intercellular transmission of polarity information during tissue morphogenesis and/or in differentiated tissues. Activated by Wnt8. Could have an antagonizing activity in the morphogenesis during development. This chain is Frizzled-10-A (fzd10-a), found in Xenopus laevis (African clawed frog).